We begin with the raw amino-acid sequence, 196 residues long: DnaA initiator-associating protein DiaA (196 aa).

Positions 34 to 196 (VVQSLLNGNK…DNTLFPHQEV (163 aa)) constitute an SIS domain.

Belongs to the SIS family. DiaA subfamily. As to quaternary structure, homotetramer; dimer of dimers.

Functionally, required for the timely initiation of chromosomal replication via direct interactions with the DnaA initiator protein. This is DnaA initiator-associating protein DiaA from Erwinia tasmaniensis (strain DSM 17950 / CFBP 7177 / CIP 109463 / NCPPB 4357 / Et1/99).